A 518-amino-acid chain; its full sequence is Gypsy retrotransposon integrase-like protein 1 (518 aa).

Residues 130–292 (QQHLPMVGNP…TPYFQMFNRN (163 aa)) enclose the Integrase catalytic domain. Ser-498 carries the post-translational modification Phosphoserine.

This chain is Gypsy retrotransposon integrase-like protein 1 (Gin1), found in Mus musculus (Mouse).